We begin with the raw amino-acid sequence, 1058 residues long: MPKRKDIQKIMVIGSGPIIIGQAAEFDYAGTQACLALKEEGYKVILVNSNPATIMTDKEIADKVYIEPLTLEFVNRIIRKERPDAILPTLGGQTGLNMAMALSKAGILDDLEIELLGTKLSAIDQAEDRDLFKQLMQELDQPIPESTIVKTVDEAVTFARDIGYPVIVRPAFTLGGTGGGICSSEEELCEITENGLKLSPVTQCLIERSIAGFKEIEYEVMRDSADNALVVCNMENFDPVGIHTGDSIVFAPTQTLSDIENQMLRDASLKIIRALKIEGGCNVQLALDPYSFKYYVIEVNPRVSRSSALASKATGYPIAKLAAKIAVGLTLDEMINPITGTTYAMFEPALDYVVAKIPRFPFDKFEHGERQLGTQMKATGEVMAIGRNLEESLLKACRSLEIGVCHNEMTSLSNISDEELVTKVIKAQDDRLFYLSEAIRRGYSIEELESLTKIDLFFLDKLLHIVEIEQELQMHVDHLESLKKAKRYGFSDQKIAEIWQKDESDIRAMRHSHSLYPVYKMVDTCAAEFDAKTPYFYSTYELENESVQSNKESILVLGSGPIRIGQGVEFDYATVHSVKAIQKAGYEAIIMNSNPETVSTDFSVSDKLYFEPLTFEDVMNVIDLEQPKGVIVQFGGQTAINLAQALSEAGVTILGTQVEDLDRAEDRDLFEKALKELGIPQPQGQTATNEEEALEAAKKIGFPVLVRPSYVLGGRAMEIVENKEDLIEYIRTAVKASPEHPILVDSYIFGKECEVDAISEGKSVLIPGIMEHIERAGVHSGDSMAVYPPQQLSKQIQETIAEYTKRLAIGLNCIGMMNVQFVIKNEQVYVIEVNPRASRTVPFLSKVTGIPMAQIATKLILGQTLKDLGYEDGLYPQSQLVHIKAPVFSFTKLAQVDSLLGPEMKSTGEVMGSDTSLEKALYKAFEANNSHLSEFGQIVFTIADDSKAEALSLARRFKAIGYQIMATQGTAAYFAEQGLSACLVGKIGDAANDIPTLVRHGHVQAIVNTVGIKRTADKDGQMIRSSAIEQGVPLFTALDTAKAMLTVLESRCFNIEAI.

Residues 1-401 (MPKRKDIQKI…SLLKACRSLE (401 aa)) form a carboxyphosphate synthetic domain region. The ATP site is built by Arg-129, Arg-169, Gly-175, Gly-176, Arg-208, Ile-210, Glu-215, Gly-241, Ile-242, His-243, Gln-284, and Glu-298. The ATP-grasp 1 domain occupies 133-327 (KQLMQELDQP…IAKLAAKIAV (195 aa)). 3 residues coordinate Mg(2+): Gln-284, Glu-298, and Asn-300. Mn(2+) contacts are provided by Gln-284, Glu-298, and Asn-300. Residues 402–546 (IGVCHNEMTS…YSTYELENES (145 aa)) are oligomerization domain. Residues 547 to 929 (VQSNKESILV…ALYKAFEANN (383 aa)) are carbamoyl phosphate synthetic domain. Residues 671–861 (EKALKELGIP…MAQIATKLIL (191 aa)) enclose the ATP-grasp 2 domain. Positions 707, 746, 748, 752, 777, 778, 779, 780, 820, and 832 each coordinate ATP. Mg(2+) is bound by residues Gln-820, Glu-832, and Asn-834. The Mn(2+) site is built by Gln-820, Glu-832, and Asn-834. An MGS-like domain is found at 930–1058 (SHLSEFGQIV…ESRCFNIEAI (129 aa)). The allosteric domain stretch occupies residues 930–1058 (SHLSEFGQIV…ESRCFNIEAI (129 aa)).

It belongs to the CarB family. As to quaternary structure, composed of two chains; the small (or glutamine) chain promotes the hydrolysis of glutamine to ammonia, which is used by the large (or ammonia) chain to synthesize carbamoyl phosphate. Tetramer of heterodimers (alpha,beta)4. Mg(2+) serves as cofactor. The cofactor is Mn(2+).

The catalysed reaction is hydrogencarbonate + L-glutamine + 2 ATP + H2O = carbamoyl phosphate + L-glutamate + 2 ADP + phosphate + 2 H(+). The enzyme catalyses hydrogencarbonate + NH4(+) + 2 ATP = carbamoyl phosphate + 2 ADP + phosphate + 2 H(+). The protein operates within amino-acid biosynthesis; L-arginine biosynthesis; carbamoyl phosphate from bicarbonate: step 1/1. It participates in pyrimidine metabolism; UMP biosynthesis via de novo pathway; (S)-dihydroorotate from bicarbonate: step 1/3. In terms of biological role, large subunit of the glutamine-dependent carbamoyl phosphate synthetase (CPSase). CPSase catalyzes the formation of carbamoyl phosphate from the ammonia moiety of glutamine, carbonate, and phosphate donated by ATP, constituting the first step of 2 biosynthetic pathways, one leading to arginine and/or urea and the other to pyrimidine nucleotides. The large subunit (synthetase) binds the substrates ammonia (free or transferred from glutamine from the small subunit), hydrogencarbonate and ATP and carries out an ATP-coupled ligase reaction, activating hydrogencarbonate by forming carboxy phosphate which reacts with ammonia to form carbamoyl phosphate. The protein is Carbamoyl phosphate synthase large chain of Streptococcus pyogenes serotype M3 (strain SSI-1).